We begin with the raw amino-acid sequence, 131 residues long: MKIFLPVLLAALLGVERASSLMCFSCLNQKSNLYCLKPTICSDQDNYCVTVSASAGIGNLVTFGHSLSKTCSPACPIPEGVNVGVASMGISCCQSFLCNFSAADGGLRASVTLLGAGLLLSLLPALLRFGP.

The N-terminal stretch at 1 to 20 (MKIFLPVLLAALLGVERASS) is a signal peptide. In terms of domain architecture, UPAR/Ly6 spans 21 to 101 (LMCFSCLNQK…CCQSFLCNFS (81 aa)). 5 cysteine pairs are disulfide-bonded: Cys-23–Cys-48, Cys-26–Cys-35, Cys-41–Cys-71, Cys-75–Cys-92, and Cys-93–Cys-98. Asn-99 is a glycosylation site (N-linked (GlcNAc...) asparagine). Ser-101 is lipidated: GPI-anchor amidated serine. The propeptide at 102–131 (AADGGLRASVTLLGAGLLLSLLPALLRFGP) is removed in mature form.

In terms of assembly, interacts with CHRNA4. Widely expressed, predominantly in liver, kidney, ovary, spleen and peripheral blood Leukocytes.

Its subcellular location is the cell membrane. Functionally, GPI-anchored cell surface protein that regulates T-lymphocytes proliferation, differentiation, and activation. Regulates the T-cell receptor (TCR) signaling by interacting with component CD3Z/CD247 at the plasma membrane, leading to CD3Z/CD247 phosphorylation modulation. Restricts the entry of human coronaviruses, including SARS-CoV, MERS-CoV and SARS-CoV-2, by interfering with spike protein-mediated membrane fusion. Also plays an essential role in placenta formation by acting as the main receptor for syncytin-A (SynA). Therefore, participates in the normal fusion of syncytiotrophoblast layer I (SynT-I) and in the proper morphogenesis of both fetal and maternal vasculatures within the placenta. May also act as a modulator of nicotinic acetylcholine receptors (nAChRs) activity. Its function is as follows. (Microbial infection) Promotes entry, likely through an enhanced virus-cell fusion process, of various viruses including HIV-1, West Nile virus, dengue virus and Zika virus. In contrast, the paramyxovirus PIV5, which enters at the plasma membrane, does not require LY6E. Mechanistically, adopts a microtubule-like organization upon viral infection and enhances viral uncoating after endosomal escape. In Homo sapiens (Human), this protein is Lymphocyte antigen 6E.